The sequence spans 178 residues: MTTIVSVRRHNHVVIGGDGQVTLGNTVMKGNAKKVRRLHHDKVIAGFAGGTADAFTLFELFEAKLKLCSGQLTKAAVEMAKDWRTDRMLRRLEALLAVADETASLIITGNGDVIQPEDDLIAIGSGGPYAQASARALLENTNLSAREIVEKSLTIAGNICIYTNQYPTIEELKIKTKG.

T2 is an active-site residue. 3 residues coordinate Na(+): G157, C160, and T163.

It belongs to the peptidase T1B family. HslV subfamily. A double ring-shaped homohexamer of HslV is capped on each side by a ring-shaped HslU homohexamer. The assembly of the HslU/HslV complex is dependent on binding of ATP.

Its subcellular location is the cytoplasm. The enzyme catalyses ATP-dependent cleavage of peptide bonds with broad specificity.. With respect to regulation, allosterically activated by HslU binding. Functionally, protease subunit of a proteasome-like degradation complex believed to be a general protein degrading machinery. The polypeptide is ATP-dependent protease subunit HslV (Hamiltonella defensa subsp. Acyrthosiphon pisum (strain 5AT)).